The chain runs to 760 residues: General transcription and DNA repair factor IIH helicase subunit XPD (760 aa).

The Helicase ATP-binding domain occupies 7–283; sequence GLLVYFPYDY…KETDEQRLRD (277 aa). ATP is bound at residue 42-49; it reads MPSGTGKT. Cysteine 116, cysteine 134, cysteine 155, and cysteine 190 together coordinate [4Fe-4S] cluster. A DEAH box motif is present at residues 234–237; that stretch reads DEAH. A mediates interaction with MMS19 region spans residues 438–637; sequence MDASLAIKPV…TQSRILKARL (200 aa).

This sequence belongs to the helicase family. RAD3/XPD subfamily. As to quaternary structure, component of the 7-subunit TFIIH core complex composed of XPB/ERCC3, XPD/ERCC2, GTF2H1, GTF2H2, GTF2H3, GTF2H4 and GTF2H5, which is active in NER. The core complex associates with the 3-subunit CDK-activating kinase (CAK) module composed of CCNH/cyclin H, CDK7 and MNAT1 to form the 10-subunit holoenzyme (holo-TFIIH) active in transcription. The interaction with GTF2H2 results in the stimulation of the 5'--&gt;3' helicase activity. Component of the MMXD complex, which includes CIAO1, ERCC2, CIAO2B, MMS19 and SLC25A5. Interacts with CIAO1 and CIAO2B; the interaction WITH CIAO2B is direct. Interacts with ATF7IP. Interacts directly with MMS19. Part of TBP-based Pol II pre-initiation complex (PIC), in which Pol II core assembles with general transcription factors and other specific initiation factors including GTF2E1, GTF2E2, GTF2F1, GTF2F2, TCEA1, ERCC2, ERCC3, GTF2H2, GTF2H3, GTF2H4, GTF2H5, GTF2A1, GTF2A2, GTF2B and TBP; this large multi-subunit PIC complex mediates DNA unwinding and targets Pol II core to the transcription start site where the first phosphodiester bond forms. Mg(2+) serves as cofactor. The cofactor is [4Fe-4S] cluster. In terms of processing, ISGylated.

The protein localises to the nucleus. Its subcellular location is the cytoplasm. It is found in the cytoskeleton. It localises to the spindle. The enzyme catalyses Couples ATP hydrolysis with the unwinding of duplex DNA at the replication fork by translocating in the 5'-3' direction. This creates two antiparallel DNA single strands (ssDNA). The leading ssDNA polymer is the template for DNA polymerase III holoenzyme which synthesizes a continuous strand.. The catalysed reaction is ATP + H2O = ADP + phosphate + H(+). In terms of biological role, ATP-dependent 5'-3' DNA helicase, component of the general transcription and DNA repair factor IIH (TFIIH) core complex, which is involved in general and transcription-coupled nucleotide excision repair (NER) of damaged DNA and, when complexed to CDK-activating kinase (CAK), involved in transcription by RNA polymerase II. In NER, TFIIH acts by opening DNA around the lesion to allow the excision of the damaged oligonucleotide and its replacement by a new DNA fragment. The ATP-dependent helicase activity of XPD/ERCC2 is required for DNA opening. In transcription, TFIIH has an essential role in transcription initiation. When the pre-initiation complex (PIC) has been established, TFIIH is required for promoter opening and promoter escape. Phosphorylation of the C-terminal tail (CTD) of the largest subunit of RNA polymerase II by the kinase module CAK controls the initiation of transcription. XPD/ERCC2 acts by forming a bridge between CAK and the core-TFIIH complex. Involved in the regulation of vitamin-D receptor activity. As part of the mitotic spindle-associated MMXD complex it plays a role in chromosome segregation. Might have a role in aging process and could play a causative role in the generation of skin cancers. In Mus musculus (Mouse), this protein is General transcription and DNA repair factor IIH helicase subunit XPD (Ercc2).